Consider the following 343-residue polypeptide: Heat-inducible transcription repressor HrcA (343 aa).

Belongs to the HrcA family.

Negative regulator of class I heat shock genes (grpE-dnaK-dnaJ and groELS operons). Prevents heat-shock induction of these operons. This chain is Heat-inducible transcription repressor HrcA, found in Bacillus cytotoxicus (strain DSM 22905 / CIP 110041 / 391-98 / NVH 391-98).